Reading from the N-terminus, the 287-residue chain is Inactive phospholipid phosphatase 7 (287 aa).

The tract at residues 1–75 is disordered; that stretch reads MPANQTRSRA…NNKDKKELPE (75 aa). Topologically, residues 1–120 are cytoplasmic; that stretch reads MPANQTRSRA…SSSWGSVRSM (120 aa). A compositionally biased stretch (gly residues) spans 31 to 40; the sequence is SGGGGGGGES. A compositionally biased stretch (low complexity) spans 49 to 65; it reads QRQQQNQQQQGDNPQPE. Residues 121-141 form a helical membrane-spanning segment; that stretch reads VKLLALTGHGIPWVFGTIVCL. Residues 142-146 lie on the Extracellular side of the membrane; it reads MRSNT. Residues 147–167 form a helical membrane-spanning segment; that stretch reads LAGQEVLVNLLLALLLDVMTV. Topologically, residues 168–215 are cytoplasmic; that stretch reads SGMQKLVKRKGPWEMPPGFFDYLAMDIYSFPAAHASRAVMVSKFLLAH. The chain crosses the membrane as a helical span at residues 216 to 236; that stretch reads LVLAVPLRILLVLWAILVGIS. Over 237–247 the chain is Extracellular; the sequence is RVLLGRHHLTD. A helical transmembrane segment spans residues 248 to 268; it reads VGCGFALGFLHYSLVEMVWLS. At 269–287 the chain is on the cytoplasmic side; it reads SNTCQTLISIGTFNWSPLY.

This sequence belongs to the PA-phosphatase related phosphoesterase family.

The protein resides in the nucleus envelope. It is found in the endoplasmic reticulum membrane. The protein localises to the membrane. In terms of biological role, plays a role as negative regulator of myoblast differentiation, in part through effects on MTOR signaling. Has no detectable enzymatic activity. The chain is Inactive phospholipid phosphatase 7 from Danio rerio (Zebrafish).